A 148-amino-acid polypeptide reads, in one-letter code: 3-dehydroquinate dehydratase (148 aa).

Tyr-26 functions as the Proton acceptor in the catalytic mechanism. Substrate-binding residues include Asn-77, His-83, and Asp-90. His-103 acts as the Proton donor in catalysis. Residues 104–105 (LS) and Arg-114 each bind substrate.

It belongs to the type-II 3-dehydroquinase family. Homododecamer.

It catalyses the reaction 3-dehydroquinate = 3-dehydroshikimate + H2O. It participates in metabolic intermediate biosynthesis; chorismate biosynthesis; chorismate from D-erythrose 4-phosphate and phosphoenolpyruvate: step 3/7. Its function is as follows. Catalyzes a trans-dehydration via an enolate intermediate. This Chlorobaculum tepidum (strain ATCC 49652 / DSM 12025 / NBRC 103806 / TLS) (Chlorobium tepidum) protein is 3-dehydroquinate dehydratase.